Here is a 472-residue protein sequence, read N- to C-terminus: MEFRQAYYDEPLIKDIKSDTSFKLSEDVDENLLPQDMRRTDLKLPQVSEVDVVRHYTRLSQMNYTVDVGIYPLGSCTMKYNPKYADRIASFAEFRNIHPFQPESTVQGTLQIMYELQEFLKKISDMDAVTLQPMAGADGEFTGILIIKKYFEDLHEDRTEIIVPDSAHGTNPASATMGGFDVVEIPSNSEGMVDLNALKAAISKKTAALMITNPNTLGIFEQNITEIAKILHDAGALLYYDGANLNAIFGITSPGLMGFDIVHFNLHKSFATPHGGGGPGAGPVAVKSFLSDFLPVPVVGYDGKRYFLDYGKKKSIGRVSSFYGSFSILLRAWSYVIRNGDDGLKNATIRAVLNSNYLKKKVEGYYEVPYYPLKKHEFVLSTEKTGRRALDIGKYLLDFGIHSPTVYFPLIVKEAMMIEPTETVSKDDLDRYADVLISALKVPEDDLKSRPRNTAVSRIDEVKAARDLKVRW.

The residue at position 268 (lysine 268) is an N6-(pyridoxal phosphate)lysine.

It belongs to the GcvP family. C-terminal subunit subfamily. In terms of assembly, the glycine cleavage system is composed of four proteins: P, T, L and H. In this organism, the P 'protein' is a heterodimer of two subunits. Pyridoxal 5'-phosphate serves as cofactor.

The catalysed reaction is N(6)-[(R)-lipoyl]-L-lysyl-[glycine-cleavage complex H protein] + glycine + H(+) = N(6)-[(R)-S(8)-aminomethyldihydrolipoyl]-L-lysyl-[glycine-cleavage complex H protein] + CO2. In terms of biological role, the glycine cleavage system catalyzes the degradation of glycine. The P protein binds the alpha-amino group of glycine through its pyridoxal phosphate cofactor; CO(2) is released and the remaining methylamine moiety is then transferred to the lipoamide cofactor of the H protein. The polypeptide is Probable glycine dehydrogenase (decarboxylating) subunit 2 (Thermoplasma acidophilum (strain ATCC 25905 / DSM 1728 / JCM 9062 / NBRC 15155 / AMRC-C165)).